The primary structure comprises 170 residues: Plastocyanin, chloroplastic (170 aa).

The transit peptide at methionine 1–alanine 71 directs the protein to the chloroplast. Positions leucine 72–asparagine 170 constitute a Plastocyanin-like domain. 4 residues coordinate Cu cation: histidine 108, cysteine 155, histidine 158, and methionine 163.

Belongs to the plastocyanin family. The cofactor is Cu(2+).

The protein localises to the plastid. The protein resides in the chloroplast thylakoid membrane. In terms of biological role, participates in electron transfer between P700 and the cytochrome b6-f complex in photosystem I. This Solanum lycopersicum (Tomato) protein is Plastocyanin, chloroplastic (PETE).